Consider the following 243-residue polypeptide: Tyrosine recombinase XerD-like (243 aa).

One can recognise a Core-binding (CB) domain in the interval 1 to 72; it reads MKQAIESFIQ…AVNQFLYFLY (72 aa). Residues 91–243 enclose the Tyr recombinase domain; the sequence is SVKKKLERED…KTSMSLEKFR (153 aa). Active-site residues include Lys-149 and Arg-210.

Belongs to the 'phage' integrase family. XerD-like subfamily.

The protein localises to the cytoplasm. Its function is as follows. Putative tyrosine recombinase. Not involved in the cutting and rejoining of the recombining DNA molecules on dif(SL) site. This chain is Tyrosine recombinase XerD-like, found in Streptococcus suis (strain 98HAH33).